We begin with the raw amino-acid sequence, 320 residues long: MQNRNTFSWVKEEMTRFISVSIMIYVITRTSISNAYPIFAQQGYENPREATGRIVCANCHLANKPVDIEVPQAVLPDTVFEAVVRIPYDMQLKQVLANGKKGALNVGAVLILPEGFELAPPDRISPELKEKMGNLSFQSYRPNKRNILVVGPVPGQKYSEIVFPILSPDPATKKDVHFLKYPIYVGGNRGRGQIYPDGSKSNNTVYNATAAGIVSRIVRKEKGGYEISIADASDGRQVVDIIPPGPELLVSEGESIKLDQPLTSNPNVGGFGQGDAEIVLQDPLRVQGLLFFLASVILAQIFLVLKKKQFEKVQLSEMNF.

Residues 1–35 (MQNRNTFSWVKEEMTRFISVSIMIYVITRTSISNA) form the signal peptide. Heme contacts are provided by tyrosine 36, cysteine 56, cysteine 59, and histidine 60. The chain crosses the membrane as a helical span at residues 286-306 (VQGLLFFLASVILAQIFLVLK).

Belongs to the cytochrome f family. As to quaternary structure, the 4 large subunits of the cytochrome b6-f complex are cytochrome b6, subunit IV (17 kDa polypeptide, petD), cytochrome f and the Rieske protein, while the 4 small subunits are PetG, PetL, PetM and PetN. The complex functions as a dimer. It depends on heme as a cofactor.

Its subcellular location is the plastid. It localises to the chloroplast thylakoid membrane. In terms of biological role, component of the cytochrome b6-f complex, which mediates electron transfer between photosystem II (PSII) and photosystem I (PSI), cyclic electron flow around PSI, and state transitions. The sequence is that of Cytochrome f from Calycanthus floridus var. glaucus (Eastern sweetshrub).